A 404-amino-acid polypeptide reads, in one-letter code: Argininosuccinate synthase (404 aa).

ATP is bound by residues 10–18 and Ala-38; that span reads AYSGGVDTS. Tyr-89 provides a ligand contact to L-citrulline. Gly-119 contributes to the ATP binding site. L-aspartate-binding residues include Thr-121, Asn-125, and Asp-126. Asn-125 serves as a coordination point for L-citrulline. Arg-129, Ser-177, Ser-186, Glu-262, and Tyr-274 together coordinate L-citrulline.

This sequence belongs to the argininosuccinate synthase family. Type 1 subfamily. In terms of assembly, homotetramer.

It is found in the cytoplasm. The enzyme catalyses L-citrulline + L-aspartate + ATP = 2-(N(omega)-L-arginino)succinate + AMP + diphosphate + H(+). It participates in amino-acid biosynthesis; L-arginine biosynthesis; L-arginine from L-ornithine and carbamoyl phosphate: step 2/3. The protein is Argininosuccinate synthase of Prochlorococcus marinus (strain MIT 9215).